A 267-amino-acid chain; its full sequence is Chlorophyll a-b binding protein 3A, chloroplastic (267 aa).

Residues 1–34 (MAASTMALSSSTFAGKTVKLAPSSSEITGNGRIT) constitute a chloroplast transit peptide. A helical membrane pass occupies residues 153–173 (LVHAQSILAIWACQVVLMGAV). Positions 154, 158, 166, 174, 177, and 183 each coordinate chlorophyll b. Chlorophyll a is bound by residues K214, E215, N218, R220, Q232, H247, and A256. The helical transmembrane segment at 221 to 241 (LAMFSMFGFFVQAIVTGKGPL) threads the bilayer. F263 provides a ligand contact to chlorophyll b.

This sequence belongs to the light-harvesting chlorophyll a/b-binding (LHC) protein family. As to quaternary structure, the LHC complex consists of chlorophyll a-b binding proteins. Binds at least 14 chlorophylls (8 Chl-a and 6 Chl-b) and carotenoids such as lutein and neoxanthin. is required as a cofactor. Post-translationally, photoregulated by reversible phosphorylation of its threonine residues.

It localises to the plastid. The protein resides in the chloroplast thylakoid membrane. Its function is as follows. The light-harvesting complex (LHC) functions as a light receptor, it captures and delivers excitation energy to photosystems with which it is closely associated. The polypeptide is Chlorophyll a-b binding protein 3A, chloroplastic (CAB3A) (Solanum lycopersicum (Tomato)).